The chain runs to 33 residues: MFKLLLVLALTMLAQSALAGGGSKSTDTVIRFG.

An N-terminal signal peptide occupies residues 1 to 19 (MFKLLLVLALTMLAQSALA). F32 carries the post-translational modification Phenylalanine amide.

It belongs to the FARP (FMRFamide related peptide) family. Expressed by the venom secretory cell of the spine. The spine is a cuticular structure containing a single large nucleated venom-secreting cell at its base. It is an independent unit capable of producing, storing and injecting venom. On the back of A.stimulea caterpillars, spines are grouped together by 50 to 100 to form scoli, of which there are eight.

The protein resides in the secreted. Its function is as follows. Is toxic when injected into Drosophila melanogaster. Also shows a low anthelmintic activity against the parasitic nematode H.contortus (drug susceptible Kirby isolate). This chain is U-limacoditoxin(13)-As11, found in Acharia stimulea (Saddleback caterpillar moth).